The primary structure comprises 190 residues: Interferon alpha-11 (190 aa).

The signal sequence occupies residues 1–23 (MARLCAFLMILIVMSYWSTCSLG). Intrachain disulfides connect C24/C122 and C52/C162. N101 is a glycosylation site (N-linked (GlcNAc...) asparagine).

It belongs to the alpha/beta interferon family. N-glycosylated.

The protein localises to the secreted. In terms of biological role, has antiviral and antiproliferative activities. Produced by macrophages and stimulates the production of two enzymes: a protein kinase and an oligoadenylate synthetase. During viral infection, mediates antiviral effect, either directly by inducing interferon-stimulated genes, either indirectly through stimulation of natural killer cells enabling them to control viral replication. The polypeptide is Interferon alpha-11 (Ifna11) (Mus musculus (Mouse)).